A 125-amino-acid chain; its full sequence is MADLQKIVDDLSALTVLEAAELAKLLEEKWGVSAAAAVAVAAAPGAGGGAPAAEEKTEFTVVLAAAGDKKIEVIKEVRAITGLGLKEAKDLVEGAPKPVKEGVAKDEAEKIKAQLEKAGGKVELK.

The protein belongs to the bacterial ribosomal protein bL12 family. As to quaternary structure, homodimer. Part of the ribosomal stalk of the 50S ribosomal subunit. Forms a multimeric L10(L12)X complex, where L10 forms an elongated spine to which 2 to 4 L12 dimers bind in a sequential fashion. Binds GTP-bound translation factors.

Its function is as follows. Forms part of the ribosomal stalk which helps the ribosome interact with GTP-bound translation factors. Is thus essential for accurate translation. The protein is Large ribosomal subunit protein bL12 of Nitrobacter winogradskyi (strain ATCC 25391 / DSM 10237 / CIP 104748 / NCIMB 11846 / Nb-255).